The following is a 236-amino-acid chain: Mammalian ependymin-related protein 1 (236 aa).

The N-terminal stretch at 1–35 (MPRRAPLRVARGSLDAWLLGGLWVCALGCLCGVGM) is a signal peptide. 3 disulfide bridges follow: Cys54–Cys184, Cys100–Cys234, and Cys125–Cys222. Residues Asn142 and Asn194 are each glycosylated (N-linked (GlcNAc...) asparagine).

It belongs to the ependymin family. In terms of assembly, homodimer. Post-translationally, N-glycosylated; the glycan contains mannose-6-phosphate moieties.

The protein resides in the lysosome lumen. It is found in the secreted. Functionally, binds anionic lipids and gangliosides at acidic pH. This chain is Mammalian ependymin-related protein 1 (EPDR1), found in Bos taurus (Bovine).